The chain runs to 132 residues: uncharacterized protein (132 aa).

The next 2 helical transmembrane spans lie at 12-32 and 37-57; these read VIGFVVLFCVLELVFYLKKLY and LTLAVFGIFSLLFFLLYIPVL.

The protein resides in the cell membrane. This is an uncharacterized protein from Methanocaldococcus jannaschii (strain ATCC 43067 / DSM 2661 / JAL-1 / JCM 10045 / NBRC 100440) (Methanococcus jannaschii).